The sequence spans 149 residues: Ribosomal RNA large subunit methyltransferase H (149 aa).

S-adenosyl-L-methionine contacts are provided by residues L71, G98, and 117–122; that span reads LSKLTL.

This sequence belongs to the RNA methyltransferase RlmH family. As to quaternary structure, homodimer.

It is found in the cytoplasm. The enzyme catalyses pseudouridine(1915) in 23S rRNA + S-adenosyl-L-methionine = N(3)-methylpseudouridine(1915) in 23S rRNA + S-adenosyl-L-homocysteine + H(+). Functionally, specifically methylates the pseudouridine at position 1915 (m3Psi1915) in 23S rRNA. This chain is Ribosomal RNA large subunit methyltransferase H, found in Campylobacter jejuni subsp. doylei (strain ATCC BAA-1458 / RM4099 / 269.97).